The primary structure comprises 261 residues: 5'-nucleotidase SurE (261 aa).

Residues Asp8, Asp9, Ser43, and Asn96 each contribute to the a divalent metal cation site.

This sequence belongs to the SurE nucleotidase family. The cofactor is a divalent metal cation.

It localises to the cytoplasm. The enzyme catalyses a ribonucleoside 5'-phosphate + H2O = a ribonucleoside + phosphate. Nucleotidase that shows phosphatase activity on nucleoside 5'-monophosphates. This Cereibacter sphaeroides (strain ATCC 17029 / ATH 2.4.9) (Rhodobacter sphaeroides) protein is 5'-nucleotidase SurE.